Here is a 117-residue protein sequence, read N- to C-terminus: Nascent polypeptide-associated complex protein (117 aa).

In terms of domain architecture, NAC-A/B spans 3–72 (PVNPRDLEKM…YTVEKPREET (70 aa)).

Belongs to the NAC-alpha family. In terms of assembly, homodimer. Interacts with the ribosome. Binds ribosomal RNA.

Its function is as follows. Contacts the emerging nascent chain on the ribosome. The polypeptide is Nascent polypeptide-associated complex protein (Aeropyrum pernix (strain ATCC 700893 / DSM 11879 / JCM 9820 / NBRC 100138 / K1)).